Reading from the N-terminus, the 388-residue chain is S-adenosylmethionine synthase (388 aa).

Position 16 (His-16) interacts with ATP. A Mg(2+)-binding site is contributed by Asp-18. Glu-44 is a K(+) binding site. 2 residues coordinate L-methionine: Glu-57 and Gln-100. Residues 100–110 (QSPEIAQGVDR) form a flexible loop region. Residues 165-167 (DAK), 231-232 (KF), Asp-240, 246-247 (RK), Ala-263, and Lys-267 contribute to the ATP site. Residue Asp-240 participates in L-methionine binding. Lys-271 lines the L-methionine pocket.

This sequence belongs to the AdoMet synthase family. Homotetramer; dimer of dimers. It depends on Mg(2+) as a cofactor. K(+) serves as cofactor.

The protein resides in the cytoplasm. The catalysed reaction is L-methionine + ATP + H2O = S-adenosyl-L-methionine + phosphate + diphosphate. Its pathway is amino-acid biosynthesis; S-adenosyl-L-methionine biosynthesis; S-adenosyl-L-methionine from L-methionine: step 1/1. Catalyzes the formation of S-adenosylmethionine (AdoMet) from methionine and ATP. The overall synthetic reaction is composed of two sequential steps, AdoMet formation and the subsequent tripolyphosphate hydrolysis which occurs prior to release of AdoMet from the enzyme. The sequence is that of S-adenosylmethionine synthase from Psychrobacter arcticus (strain DSM 17307 / VKM B-2377 / 273-4).